Reading from the N-terminus, the 416-residue chain is Enolase (416 aa).

Q156 contributes to the (2R)-2-phosphoglycerate binding site. The active-site Proton donor is the E200. Mg(2+)-binding residues include D236, E281, and D308. The (2R)-2-phosphoglycerate site is built by K333, R362, S363, and K384. K333 functions as the Proton acceptor in the catalytic mechanism.

It belongs to the enolase family. It depends on Mg(2+) as a cofactor.

The protein localises to the cytoplasm. The protein resides in the secreted. It is found in the cell surface. The enzyme catalyses (2R)-2-phosphoglycerate = phosphoenolpyruvate + H2O. Its pathway is carbohydrate degradation; glycolysis; pyruvate from D-glyceraldehyde 3-phosphate: step 4/5. Functionally, catalyzes the reversible conversion of 2-phosphoglycerate (2-PG) into phosphoenolpyruvate (PEP). It is essential for the degradation of carbohydrates via glycolysis. In Methanothermobacter thermautotrophicus (strain ATCC 29096 / DSM 1053 / JCM 10044 / NBRC 100330 / Delta H) (Methanobacterium thermoautotrophicum), this protein is Enolase.